The primary structure comprises 300 residues: Shikimate kinase, chloroplastic (300 aa).

Residues 1–65 (MEARVSQSLQ…SDRRVQLKVS (65 aa)) constitute a chloroplast transit peptide. Residue 111–118 (GMMGCGKT) coordinates ATP. Thr118 serves as a coordination point for Mg(2+). Substrate contacts are provided by Asp136, Arg161, and Gly183. An ATP-binding site is contributed by Arg222.

This sequence belongs to the shikimate kinase family. The cofactor is Mg(2+).

It is found in the plastid. It localises to the chloroplast. The catalysed reaction is shikimate + ATP = 3-phosphoshikimate + ADP + H(+). It participates in metabolic intermediate biosynthesis; chorismate biosynthesis; chorismate from D-erythrose 4-phosphate and phosphoenolpyruvate: step 5/7. Functionally, catalyzes the specific phosphorylation of the 3-hydroxyl group of shikimic acid using ATP as a cosubstrate. The polypeptide is Shikimate kinase, chloroplastic (SK) (Solanum lycopersicum (Tomato)).